We begin with the raw amino-acid sequence, 74 residues long: Exodeoxyribonuclease 7 small subunit (74 aa).

It belongs to the XseB family. Heterooligomer composed of large and small subunits.

It is found in the cytoplasm. It carries out the reaction Exonucleolytic cleavage in either 5'- to 3'- or 3'- to 5'-direction to yield nucleoside 5'-phosphates.. Functionally, bidirectionally degrades single-stranded DNA into large acid-insoluble oligonucleotides, which are then degraded further into small acid-soluble oligonucleotides. This chain is Exodeoxyribonuclease 7 small subunit, found in Neisseria meningitidis serogroup C / serotype 2a (strain ATCC 700532 / DSM 15464 / FAM18).